Reading from the N-terminus, the 135-residue chain is MARPDMGGPKMGGGFGGPRSGGFGGGGGGGGFGGGGFGGGRGGDRGDRGDRDDRGGDEGGGRRGFGRRKVCRFCADKTLKVDYKDQGQMKYFLTERGKIIPRRISGNCAKHQREVATAIKRGRMLAILPYTVGQM.

Residues 1-65 (MARPDMGGPK…GDEGGGRRGF (65 aa)) are disordered. The span at 9 to 41 (PKMGGGFGGPRSGGFGGGGGGGGFGGGGFGGGR) shows a compositional bias: gly residues. The span at 42 to 61 (GGDRGDRGDRDDRGGDEGGG) shows a compositional bias: basic and acidic residues.

The protein belongs to the bacterial ribosomal protein bS18 family. In terms of assembly, part of the 30S ribosomal subunit. Forms a tight heterodimer with protein bS6.

Functionally, binds as a heterodimer with protein bS6 to the central domain of the 16S rRNA, where it helps stabilize the platform of the 30S subunit. This chain is Small ribosomal subunit protein bS18, found in Anaeromyxobacter dehalogenans (strain 2CP-C).